Consider the following 1464-residue polypeptide: Gag-Pol polyprotein (1464 aa).

Glycine 2 carries the N-myristoyl glycine; by host lipid modification. The tract at residues 7-31 is interaction with Gp41; sequence VLRGKKADELERIRLRPGGKKKYRL. Positions 16-22 match the Nuclear export signal motif; the sequence is LERIRLR. Positions 26–32 match the Nuclear localization signal motif; it reads KKKYRLK. The segment at 111 to 136 is disordered; sequence ETGTAEKMPSTSRPTAPSSEKGGNYP. A compositionally biased stretch (polar residues) spans 119 to 128; the sequence is PSTSRPTAPS. A Phosphotyrosine; by host modification is found at tyrosine 135. The interval 191–228 is interaction with human PPIA/CYPA and NUP153; sequence NCVGDHQAAMQIIREIINEEAAEWDVQHPIPGPLPAGQ. Positions 279–365 are dimerization/Multimerization of capsid protein p24; that stretch reads YNPTNILDIK…GGPGQKARLM (87 aa). 2 consecutive CCHC-type zinc fingers follow at residues 389–406 and 410–427; these read FKCWNCGKEGHSARQCRA and QGCWKCGKPGHIMTNCPD. Positions 432–500 are disordered; sequence FLRTGPLGKE…RGLTAPRAGG (69 aa). The segment covering 456 to 469 has biased composition (low complexity); it reads TNSTPSGSSSGSTG. The span at 473–485 shows a compositional bias: basic and acidic residues; it reads AAREKTERAERET. Positions 514–518 are dimerization of protease; that stretch reads PQFSL. The region spanning 533–602 is the Peptidase A2 domain; sequence VEVLLDTGAD…TPINIFGRNI (70 aa). The active-site For protease activity; shared with dimeric partner is the aspartate 538. Dimerization of protease regions lie at residues 562-568 and 601-613; these read GIGGFIN and NILTALGMSLNLP. Positions 656–846 constitute a Reverse transcriptase domain; it reads EGQLEEAPPT…PPYHWMGYEL (191 aa). Residues aspartate 722, aspartate 797, and aspartate 798 each coordinate Mg(2+). Positions 839-847 are RT 'primer grip'; it reads YHWMGYELW. A Tryptophan repeat motif motif is present at residues 1009-1025; it reads WEQWWDNYWQVTWIPDW. Residues 1045 to 1168 enclose the RNase H type-1 domain; sequence IPGAETFYTD…VDHLVSQGIR (124 aa). Mg(2+) is bound by residues aspartate 1054, glutamate 1089, aspartate 1109, and aspartate 1160. The Integrase-type zinc-finger motif lies at 1174 to 1215; the sequence is EKIEPAQEEHEKYHSNVKELSHKFGIPNLVARQIVNSCAQCQ. 4 residues coordinate Zn(2+): histidine 1183, histidine 1187, cysteine 1211, and cysteine 1214. Positions 1224 to 1375 constitute an Integrase catalytic domain; the sequence is QVNAELGTWQ…TPSERLINMI (152 aa). Aspartate 1235, aspartate 1287, and glutamate 1323 together coordinate Mg(2+). The integrase-type DNA-binding region spans 1394 to 1441; sequence FRVYFREGRDQLWKGPGELLWKGEGAVLVKVGTDIKIIPRRKAKIIRD.

Homotrimer; further assembles as hexamers of trimers. Interacts with gp41 (via C-terminus). Interacts with host CALM1; this interaction induces a conformational change in the Matrix protein, triggering exposure of the myristate group. Interacts with host AP3D1; this interaction allows the polyprotein trafficking to multivesicular bodies during virus assembly. Part of the pre-integration complex (PIC) which is composed of viral genome, matrix protein, Vpr and integrase. In terms of assembly, homodimer; the homodimer further multimerizes as homohexamers or homopentamers. Interacts with human PPIA/CYPA. Interacts with human NUP153. Interacts with host PDZD8; this interaction stabilizes the capsid. Interacts with monkey TRIM5; this interaction destabilizes the capsid. As to quaternary structure, homodimer, whose active site consists of two apposed aspartic acid residues. Heterodimer of p66 RT and p51 RT (RT p66/p51). Heterodimerization of RT is essential for DNA polymerase activity. The overall folding of the subdomains is similar in p66 RT and p51 RT but the spatial arrangements of the subdomains are dramatically different. In terms of assembly, homotetramer; may further associate as a homohexadecamer. Part of the pre-integration complex (PIC) which is composed of viral genome, matrix protein, Vpr and integrase. Interacts with human SMARCB1/INI1 and human PSIP1/LEDGF isoform 1. Interacts with human KPNA3; this interaction might play a role in nuclear import of the pre-integration complex. Interacts with human NUP153; this interaction might play a role in nuclear import of the pre-integration complex. The cofactor is Mg(2+). In terms of processing, specific enzymatic cleavages by the viral protease yield mature proteins. The protease is released by autocatalytic cleavage. The polyprotein is cleaved during and after budding, this process is termed maturation. Proteolytic cleavage of p66 RT removes the RNase H domain to yield the p51 RT subunit. Nucleocapsid protein p7 might be further cleaved after virus entry.

The protein localises to the host cell membrane. Its subcellular location is the host endosome. It localises to the host multivesicular body. The protein resides in the virion membrane. It is found in the host nucleus. The protein localises to the host cytoplasm. Its subcellular location is the virion. It carries out the reaction Endopeptidase for which the P1 residue is preferably hydrophobic.. The catalysed reaction is Endohydrolysis of RNA in RNA/DNA hybrids. Three different cleavage modes: 1. sequence-specific internal cleavage of RNA. Human immunodeficiency virus type 1 and Moloney murine leukemia virus enzymes prefer to cleave the RNA strand one nucleotide away from the RNA-DNA junction. 2. RNA 5'-end directed cleavage 13-19 nucleotides from the RNA end. 3. DNA 3'-end directed cleavage 15-20 nucleotides away from the primer terminus.. It catalyses the reaction 3'-end directed exonucleolytic cleavage of viral RNA-DNA hybrid.. The enzyme catalyses DNA(n) + a 2'-deoxyribonucleoside 5'-triphosphate = DNA(n+1) + diphosphate. Its activity is regulated as follows. Protease: The viral protease is inhibited by many synthetic protease inhibitors (PIs), such as amprenavir, atazanavir, indinavir, loprinavir, nelfinavir, ritonavir and saquinavir. Use of protease inhibitors in tritherapy regimens permit more ambitious therapeutic strategies. Reverse transcriptase/ribonuclease H: RT can be inhibited either by nucleoside RT inhibitors (NRTIs) or by non nucleoside RT inhibitors (NNRTIs). NRTIs act as chain terminators, whereas NNRTIs inhibit DNA polymerization by binding a small hydrophobic pocket near the RT active site and inducing an allosteric change in this region. Classical NRTIs are abacavir, adefovir (PMEA), didanosine (ddI), lamivudine (3TC), stavudine (d4T), tenofovir (PMPA), zalcitabine (ddC), and zidovudine (AZT). Classical NNRTIs are atevirdine (BHAP U-87201E), delavirdine, efavirenz (DMP-266), emivirine (I-EBU), and nevirapine (BI-RG-587). The tritherapies used as a basic effective treatment of AIDS associate two NRTIs and one NNRTI. In terms of biological role, mediates, with Gag polyprotein, the essential events in virion assembly, including binding the plasma membrane, making the protein-protein interactions necessary to create spherical particles, recruiting the viral Env proteins, and packaging the genomic RNA via direct interactions with the RNA packaging sequence (Psi). Gag-Pol polyprotein may regulate its own translation, by the binding genomic RNA in the 5'-UTR. At low concentration, the polyprotein would promote translation, whereas at high concentration, the polyprotein would encapsidate genomic RNA and then shut off translation. Targets the polyprotein to the plasma membrane via a multipartite membrane-binding signal, that includes its myristoylated N-terminus. Matrix protein is part of the pre-integration complex. Implicated in the release from host cell mediated by Vpu. Binds to RNA. Its function is as follows. Forms the conical core that encapsulates the genomic RNA-nucleocapsid complex in the virion. Most core are conical, with only 7% tubular. The core is constituted by capsid protein hexamer subunits. The core is disassembled soon after virion entry. Host restriction factors such as TRIM5-alpha or TRIMCyp bind retroviral capsids and cause premature capsid disassembly, leading to blocks in reverse transcription. Capsid restriction by TRIM5 is one of the factors which restricts HIV-1 to the human species. Host PIN1 apparently facilitates the virion uncoating. On the other hand, interactions with PDZD8 or CYPA stabilize the capsid. Functionally, encapsulates and protects viral dimeric unspliced genomic RNA (gRNA). Binds these RNAs through its zinc fingers. Acts as a nucleic acid chaperone which is involved in rearangement of nucleic acid secondary structure during gRNA retrotranscription. Also facilitates template switch leading to recombination. As part of the polyprotein, participates in gRNA dimerization, packaging, tRNA incorporation and virion assembly. In terms of biological role, aspartyl protease that mediates proteolytic cleavages of Gag and Gag-Pol polyproteins during or shortly after the release of the virion from the plasma membrane. Cleavages take place as an ordered, step-wise cascade to yield mature proteins. This process is called maturation. Displays maximal activity during the budding process just prior to particle release from the cell. Also cleaves Nef and Vif, probably concomitantly with viral structural proteins on maturation of virus particles. Hydrolyzes host EIF4GI and PABP1 in order to shut off the capped cellular mRNA translation. The resulting inhibition of cellular protein synthesis serves to ensure maximal viral gene expression and to evade host immune response. Multifunctional enzyme that converts the viral RNA genome into dsDNA in the cytoplasm, shortly after virus entry into the cell. This enzyme displays a DNA polymerase activity that can copy either DNA or RNA templates, and a ribonuclease H (RNase H) activity that cleaves the RNA strand of RNA-DNA heteroduplexes in a partially processive 3' to 5' endonucleasic mode. Conversion of viral genomic RNA into dsDNA requires many steps. A tRNA(3)-Lys binds to the primer-binding site (PBS) situated at the 5'-end of the viral RNA. RT uses the 3' end of the tRNA primer to perform a short round of RNA-dependent minus-strand DNA synthesis. The reading proceeds through the U5 region and ends after the repeated (R) region which is present at both ends of viral RNA. The portion of the RNA-DNA heteroduplex is digested by the RNase H, resulting in a ssDNA product attached to the tRNA primer. This ssDNA/tRNA hybridizes with the identical R region situated at the 3' end of viral RNA. This template exchange, known as minus-strand DNA strong stop transfer, can be either intra- or intermolecular. RT uses the 3' end of this newly synthesized short ssDNA to perform the RNA-dependent minus-strand DNA synthesis of the whole template. RNase H digests the RNA template except for two polypurine tracts (PPTs) situated at the 5'-end and near the center of the genome. It is not clear if both polymerase and RNase H activities are simultaneous. RNase H probably can proceed both in a polymerase-dependent (RNA cut into small fragments by the same RT performing DNA synthesis) and a polymerase-independent mode (cleavage of remaining RNA fragments by free RTs). Secondly, RT performs DNA-directed plus-strand DNA synthesis using the PPTs that have not been removed by RNase H as primers. PPTs and tRNA primers are then removed by RNase H. The 3' and 5' ssDNA PBS regions hybridize to form a circular dsDNA intermediate. Strand displacement synthesis by RT to the PBS and PPT ends produces a blunt ended, linear dsDNA copy of the viral genome that includes long terminal repeats (LTRs) at both ends. Its function is as follows. Catalyzes viral DNA integration into the host chromosome, by performing a series of DNA cutting and joining reactions. This enzyme activity takes place after virion entry into a cell and reverse transcription of the RNA genome in dsDNA. The first step in the integration process is 3' processing. This step requires a complex comprising the viral genome, matrix protein, Vpr and integrase. This complex is called the pre-integration complex (PIC). The integrase protein removes 2 nucleotides from each 3' end of the viral DNA, leaving recessed CA OH's at the 3' ends. In the second step, the PIC enters cell nucleus. This process is mediated through integrase and Vpr proteins, and allows the virus to infect a non dividing cell. This ability to enter the nucleus is specific of lentiviruses, other retroviruses cannot and rely on cell division to access cell chromosomes. In the third step, termed strand transfer, the integrase protein joins the previously processed 3' ends to the 5' ends of strands of target cellular DNA at the site of integration. The 5'-ends are produced by integrase-catalyzed staggered cuts, 5 bp apart. A Y-shaped, gapped, recombination intermediate results, with the 5'-ends of the viral DNA strands and the 3' ends of target DNA strands remaining unjoined, flanking a gap of 5 bp. The last step is viral DNA integration into host chromosome. This involves host DNA repair synthesis in which the 5 bp gaps between the unjoined strands are filled in and then ligated. Since this process occurs at both cuts flanking the HIV genome, a 5 bp duplication of host DNA is produced at the ends of HIV-1 integration. Alternatively, Integrase may catalyze the excision of viral DNA just after strand transfer, this is termed disintegration. The sequence is that of Gag-Pol polyprotein (gag-pol) from Homo sapiens (Human).